Consider the following 165-residue polypeptide: Shikimate kinase (165 aa).

11 to 16 (GAGKTT) is a binding site for ATP. T15 is a binding site for Mg(2+). Residues D33, R57, and G78 each coordinate substrate. R116 is an ATP binding site. Residue R134 coordinates substrate.

This sequence belongs to the shikimate kinase family. Monomer. The cofactor is Mg(2+).

Its subcellular location is the cytoplasm. It catalyses the reaction shikimate + ATP = 3-phosphoshikimate + ADP + H(+). It participates in metabolic intermediate biosynthesis; chorismate biosynthesis; chorismate from D-erythrose 4-phosphate and phosphoenolpyruvate: step 5/7. In terms of biological role, catalyzes the specific phosphorylation of the 3-hydroxyl group of shikimic acid using ATP as a cosubstrate. The sequence is that of Shikimate kinase from Bacillus mycoides (strain KBAB4) (Bacillus weihenstephanensis).